We begin with the raw amino-acid sequence, 54 residues long: Large ribosomal subunit protein bL33A (54 aa).

Belongs to the bacterial ribosomal protein bL33 family.

The polypeptide is Large ribosomal subunit protein bL33A (rpmG1) (Mycobacterium bovis (strain ATCC BAA-935 / AF2122/97)).